A 273-amino-acid chain; its full sequence is Phosphate import ATP-binding protein PstB (273 aa).

The ABC transporter domain occupies 26–268 (MRGEKVCVFY…PTEKRTQDYI (243 aa)). Residue 58–65 (GPSGCGKS) coordinates ATP.

It belongs to the ABC transporter superfamily. Phosphate importer (TC 3.A.1.7) family. The complex is composed of two ATP-binding proteins (PstB), two transmembrane proteins (PstC and PstA) and a solute-binding protein (PstS).

It is found in the cell inner membrane. It carries out the reaction phosphate(out) + ATP + H2O = ADP + 2 phosphate(in) + H(+). Functionally, part of the ABC transporter complex PstSACB involved in phosphate import. Responsible for energy coupling to the transport system. The polypeptide is Phosphate import ATP-binding protein PstB (Brucella abortus (strain 2308)).